The following is a 341-amino-acid chain: MIEPVVGYRMLQAIGWPWPGPPADAAWQAMCAVYSQCRPARVIEQHRSGYVVAEAPEVPIKVESLPAWQRRGFPRHERAVVGDWVLLDGRRIVALLPRRTVIKRLAAGEHYRQQLIAANLDTAFIVCGLDGDFNPRRIERYCVLIGSGGVEPVVVLTKVDLCADVGAAVAVLREHSSQALAVVAVDAREAEPVAALYPWLLPGRTVALLGSSGAGKSTLTNTLLGEQRMKVGEVRQRDSRGRHTTTHRALLPLPSGACLIDTPGMRELKFTGEEDLVEEFADIELLATQCRFRDCAHQAEPGCAVRAAIGCGTLDPQRLHHYFKLRGEIVGAADRSTLRRY.

Positions 112 to 268 (RQQLIAANLD…LIDTPGMREL (157 aa)) constitute a CP-type G domain. Residues 157–160 (TKVD) and 210–218 (GSSGAGKST) each bind GTP. 4 residues coordinate Zn(2+): C290, C295, H297, and C303.

Belongs to the TRAFAC class YlqF/YawG GTPase family. RsgA subfamily. In terms of assembly, monomer. Associates with 30S ribosomal subunit, binds 16S rRNA. Zn(2+) serves as cofactor.

It localises to the cytoplasm. Its function is as follows. One of several proteins that assist in the late maturation steps of the functional core of the 30S ribosomal subunit. Helps release RbfA from mature subunits. May play a role in the assembly of ribosomal proteins into the subunit. Circularly permuted GTPase that catalyzes slow GTP hydrolysis, GTPase activity is stimulated by the 30S ribosomal subunit. The chain is Small ribosomal subunit biogenesis GTPase RsgA from Xylella fastidiosa (strain 9a5c).